The following is an 85-amino-acid chain: uncharacterized protein (85 aa).

A compositionally biased stretch (basic and acidic residues) spans 64 to 76 (DPPVRRSGGREQH). The disordered stretch occupies residues 64–85 (DPPVRRSGGREQHLAQVWRATS).

This is an uncharacterized protein from Mycobacterium bovis (strain ATCC BAA-935 / AF2122/97).